The following is a 115-amino-acid chain: MQKLIQDITKEQLRTDLPAFRPGDTLRVHVKVVEGNRERIQIFEGVVIKRRGGGISETFTVRKISYGVGVERTFPVHTPKIAKIEVVRYGKVRRAKLYYLRELRGKAARIKEIRR.

It belongs to the bacterial ribosomal protein bL19 family.

This protein is located at the 30S-50S ribosomal subunit interface and may play a role in the structure and function of the aminoacyl-tRNA binding site. This chain is Large ribosomal subunit protein bL19, found in Bacillus velezensis (strain DSM 23117 / BGSC 10A6 / LMG 26770 / FZB42) (Bacillus amyloliquefaciens subsp. plantarum).